We begin with the raw amino-acid sequence, 220 residues long: UPF0319 protein Ent638_1476 (220 aa).

Positions 1–20 (MKTGIVSAVLALVMPVCVYA) are cleaved as a signal peptide.

It belongs to the UPF0319 family.

This is UPF0319 protein Ent638_1476 from Enterobacter sp. (strain 638).